The following is a 664-amino-acid chain: RNA-binding protein RMD9, mitochondrial (664 aa).

The N-terminal 32 residues, 1–32 (MFRLVQQQTLKSRVPNQFVSASRNSLNSQFRF), are a transit peptide targeting the mitochondrion. Residues 38 to 68 (LERNPQQDPTTAAPAKSSSDKRNSKKKYENN) form a disordered region. Basic and acidic residues predominate over residues 55 to 68 (SSDKRNSKKKYENN).

It belongs to the RMD9 family. In terms of assembly, monomer. Post-translationally, phosphorylated. Phosphorylation promotes binding to RNA.

The protein localises to the mitochondrion inner membrane. Binds the 3'-UTR of mitochondrial mRNAs. Involved in the processing or stability of mitochondrial mRNAs. The chain is RNA-binding protein RMD9, mitochondrial (RMD9) from Kluyveromyces lactis (strain ATCC 8585 / CBS 2359 / DSM 70799 / NBRC 1267 / NRRL Y-1140 / WM37) (Yeast).